Here is a 117-residue protein sequence, read N- to C-terminus: uncharacterized protein (117 aa).

Positions 5–50 (DKIHNTNEQITALEKKKYQIETTLLEKQRDLLKLETQQNKAKLELL) form a coiled coil.

This is an uncharacterized protein from Bacillus pumilus (Bacillus mesentericus).